Consider the following 257-residue polypeptide: Imidazole glycerol phosphate synthase subunit HisF (257 aa).

Residues Asp-11 and Asp-130 contribute to the active site.

The protein belongs to the HisA/HisF family. Heterodimer of HisH and HisF.

The protein resides in the cytoplasm. It catalyses the reaction 5-[(5-phospho-1-deoxy-D-ribulos-1-ylimino)methylamino]-1-(5-phospho-beta-D-ribosyl)imidazole-4-carboxamide + L-glutamine = D-erythro-1-(imidazol-4-yl)glycerol 3-phosphate + 5-amino-1-(5-phospho-beta-D-ribosyl)imidazole-4-carboxamide + L-glutamate + H(+). It functions in the pathway amino-acid biosynthesis; L-histidine biosynthesis; L-histidine from 5-phospho-alpha-D-ribose 1-diphosphate: step 5/9. Its function is as follows. IGPS catalyzes the conversion of PRFAR and glutamine to IGP, AICAR and glutamate. The HisF subunit catalyzes the cyclization activity that produces IGP and AICAR from PRFAR using the ammonia provided by the HisH subunit. The sequence is that of Imidazole glycerol phosphate synthase subunit HisF from Tolumonas auensis (strain DSM 9187 / NBRC 110442 / TA 4).